Reading from the N-terminus, the 231-residue chain is Small ribosomal subunit protein uS3 (231 aa).

The region spanning 39–107 (IRELLHKELK…DVVINIVEIR (69 aa)) is the KH type-2 domain.

The protein belongs to the universal ribosomal protein uS3 family. Part of the 30S ribosomal subunit. Forms a tight complex with proteins S10 and S14.

Its function is as follows. Binds the lower part of the 30S subunit head. Binds mRNA in the 70S ribosome, positioning it for translation. The sequence is that of Small ribosomal subunit protein uS3 from Nitrobacter hamburgensis (strain DSM 10229 / NCIMB 13809 / X14).